Reading from the N-terminus, the 287-residue chain is uncharacterized protein (287 aa).

Positions Met-1–Val-31 are cleaved as a signal peptide.

This sequence belongs to the MG439/MG440 family.

This is an uncharacterized protein from Mycoplasma pneumoniae (strain ATCC 29342 / M129 / Subtype 1) (Mycoplasmoides pneumoniae).